A 530-amino-acid chain; its full sequence is Fusaric acid resistance protein FusA (530 aa).

A signal peptide spans 1–23; it reads MQSPATKGTLALAVLAVSLIMAG. A lipid anchor (N-palmitoyl cysteine) is attached at Cys-24. The S-diacylglycerol cysteine moiety is linked to residue Cys-24. Disordered stretches follow at residues 375 to 442 and 476 to 530; these read NAGV…RQRA and GVET…PAAR. 2 stretches are compositionally biased toward low complexity: residues 421–430 and 494–530; these read RPQLPAVARR and AAGA…PAAR.

This sequence belongs to the outer membrane factor (OMF) (TC 1.B.17) family.

The protein localises to the cell membrane. Involved in the resistance (detoxification) of the fungal toxin fusaric acid. This chain is Fusaric acid resistance protein FusA (fusA), found in Burkholderia cepacia (Pseudomonas cepacia).